The following is a 158-amino-acid chain: Endoribonuclease YbeY (158 aa).

Positions 119, 123, and 129 each coordinate Zn(2+).

The protein belongs to the endoribonuclease YbeY family. It depends on Zn(2+) as a cofactor.

The protein resides in the cytoplasm. Its function is as follows. Single strand-specific metallo-endoribonuclease involved in late-stage 70S ribosome quality control and in maturation of the 3' terminus of the 16S rRNA. In Chlamydia pneumoniae (Chlamydophila pneumoniae), this protein is Endoribonuclease YbeY.